The primary structure comprises 207 residues: Cytochrome c biogenesis ATP-binding export protein CcmA (207 aa).

Positions 4-207 (LEARELLCER…RISLTQTGAA (204 aa)) constitute an ABC transporter domain. 36–43 (GSNGAGKT) is an ATP binding site.

It belongs to the ABC transporter superfamily. CcmA exporter (TC 3.A.1.107) family. As to quaternary structure, the complex is composed of two ATP-binding proteins (CcmA) and two transmembrane proteins (CcmB).

The protein localises to the cell inner membrane. The catalysed reaction is heme b(in) + ATP + H2O = heme b(out) + ADP + phosphate + H(+). Part of the ABC transporter complex CcmAB involved in the biogenesis of c-type cytochromes; once thought to export heme, this seems not to be the case, but its exact role is uncertain. Responsible for energy coupling to the transport system. The sequence is that of Cytochrome c biogenesis ATP-binding export protein CcmA from Escherichia coli O6:H1 (strain CFT073 / ATCC 700928 / UPEC).